The primary structure comprises 658 residues: UvrABC system protein B (658 aa).

One can recognise a Helicase ATP-binding domain in the interval 25–178 (KSLKNKNHYQ…KSFLLKLVEM (154 aa)). 38-45 (GVTGSGKT) provides a ligand contact to ATP. The Beta-hairpin motif lies at 91–114 (HFDYYQPESYIPRRDLFIEKDSSI). The 175-residue stretch at 433 to 607 (QVQDLFDEIK…ELKLRDDETK (175 aa)) folds into the Helicase C-terminal domain. In terms of domain architecture, UVR spans 623–658 (EKIIKELDKKMRECAKNLDFEEAMHLRDEIAKLRTL).

Belongs to the UvrB family. Forms a heterotetramer with UvrA during the search for lesions. Interacts with UvrC in an incision complex.

Its subcellular location is the cytoplasm. Its function is as follows. The UvrABC repair system catalyzes the recognition and processing of DNA lesions. A damage recognition complex composed of 2 UvrA and 2 UvrB subunits scans DNA for abnormalities. Upon binding of the UvrA(2)B(2) complex to a putative damaged site, the DNA wraps around one UvrB monomer. DNA wrap is dependent on ATP binding by UvrB and probably causes local melting of the DNA helix, facilitating insertion of UvrB beta-hairpin between the DNA strands. Then UvrB probes one DNA strand for the presence of a lesion. If a lesion is found the UvrA subunits dissociate and the UvrB-DNA preincision complex is formed. This complex is subsequently bound by UvrC and the second UvrB is released. If no lesion is found, the DNA wraps around the other UvrB subunit that will check the other stand for damage. In Helicobacter acinonychis (strain Sheeba), this protein is UvrABC system protein B.